We begin with the raw amino-acid sequence, 928 residues long: cGMP-dependent 3',5'-cyclic phosphodiesterase (928 aa).

The residue at position 109 (Ser109) is a Phosphoserine. The interval Arg188–Tyr210 is disordered. 2 GAF domains span residues Asp228–Leu365 and Asp397–Ile536. 5 residues coordinate 3',5'-cyclic GMP: Ser419, Asp434, Ile453, Tyr476, and Thr487. A PDEase domain is found at Ser566–Phe890. Residue His644 is the Proton donor of the active site. Zn(2+)-binding residues include His648, His684, Asp685, and Asp796. A Mg(2+)-binding site is contributed by Asp685.

It belongs to the cyclic nucleotide phosphodiesterase family. PDE2 subfamily. As to quaternary structure, homodimer. Requires Zn(2+) as cofactor. It depends on Mg(2+) as a cofactor. In terms of tissue distribution, expressed in brain and liver.

The protein resides in the cell membrane. Its subcellular location is the cytoplasm. It is found in the mitochondrion matrix. It localises to the mitochondrion inner membrane. The protein localises to the mitochondrion outer membrane. It catalyses the reaction a nucleoside 3',5'-cyclic phosphate + H2O = a nucleoside 5'-phosphate + H(+). It carries out the reaction 3',5'-cyclic GMP + H2O = GMP + H(+). The catalysed reaction is 3',5'-cyclic AMP + H2O = AMP + H(+). With respect to regulation, the 3',5'-cyclic-AMP phosphodiesterase activity is stimulated by 3',5'-cyclic GMP. Specifically inhibited by Bay 60-7550. When repressed, protected from ionomycin- but not staurosporin-induced cell death. Its function is as follows. cGMP-activated cyclic nucleotide phosphodiesterase with a dual-specificity for the second messengers cAMP and cGMP, which are key regulators of many important physiological processes. Has a higher efficiency with cGMP compared to cAMP. Plays a role in cell growth and migration. Functionally, regulates mitochondrial cAMP levels and respiration. Involved in the regulation of mitochondria morphology/dynamics and apoptotic cell death via local modulation of cAMP/PKA signaling in the mitochondrion, including the monitoring of local cAMP levels at the outer mitochondrial membrane and of PKA-dependent phosphorylation of Dnm1l. The polypeptide is cGMP-dependent 3',5'-cyclic phosphodiesterase (Rattus norvegicus (Rat)).